The sequence spans 186 residues: Translation initiation factor IF-3 (186 aa).

Belongs to the IF-3 family. As to quaternary structure, monomer.

It localises to the cytoplasm. Its function is as follows. IF-3 binds to the 30S ribosomal subunit and shifts the equilibrium between 70S ribosomes and their 50S and 30S subunits in favor of the free subunits, thus enhancing the availability of 30S subunits on which protein synthesis initiation begins. In Borrelia garinii subsp. bavariensis (strain ATCC BAA-2496 / DSM 23469 / PBi) (Borreliella bavariensis), this protein is Translation initiation factor IF-3.